The sequence spans 888 residues: Leucine--tRNA ligase (888 aa).

A 'HIGH' region motif is present at residues proline 43 to histidine 53. A 'KMSKS' region motif is present at residues lysine 644–serine 648. Lysine 647 is a binding site for ATP.

It belongs to the class-I aminoacyl-tRNA synthetase family.

Its subcellular location is the cytoplasm. The enzyme catalyses tRNA(Leu) + L-leucine + ATP = L-leucyl-tRNA(Leu) + AMP + diphosphate. The protein is Leucine--tRNA ligase of Rhodopseudomonas palustris (strain BisA53).